A 365-amino-acid chain; its full sequence is Terpene cyclase DEP1 (365 aa).

The next 8 membrane-spanning stretches (helical) occupy residues 10–30, 82–102, 116–136, 158–178, 188–208, 233–253, 297–317, and 338–358; these read LYLSALGVWGLWGYAYFNGMF, LLFFDINYAVACTNLWTLIES, AWAMVLCNANGAAIVLPIYLY, LPIITVVMLLQPLLIFAPAWF, ALIALFQVAPVIVLGLYVGIT, LILAGSVASAVHIYTLTGALF, LFSQWDWIVVCLTSVVYAQLL, and MIYLTIATVVLGPGGAGSFAL.

Belongs to the membrane-bound ascI terpene cyclase family.

The protein localises to the membrane. The protein operates within polyketide biosynthesis. In terms of biological role, part of the gene cluster that mediates the biosynthesis of depudecin, a highly oxidized eleven-carbon linear polyketide that acts as a histone deacetylase (HDAC) inhibitor and makes a small contribution to pathogenesis. The reducing polyketide synthase DEP5 is the central enzyme in depudecin biosynthesis by yielding the backbone polyketide chain. The monooxygenases DEP2 and DEP4, as well as the uncharacterized protein DEP1, then act as tailoring enzymes to modify the intermediate polyketide chain into depudecin. This Fusarium langsethiae protein is Terpene cyclase DEP1.